The chain runs to 212 residues: Uridine kinase (212 aa).

ATP is bound at residue 12-19 (GGSGGGKT).

Belongs to the uridine kinase family.

The protein resides in the cytoplasm. The enzyme catalyses uridine + ATP = UMP + ADP + H(+). It carries out the reaction cytidine + ATP = CMP + ADP + H(+). Its pathway is pyrimidine metabolism; CTP biosynthesis via salvage pathway; CTP from cytidine: step 1/3. It functions in the pathway pyrimidine metabolism; UMP biosynthesis via salvage pathway; UMP from uridine: step 1/1. The polypeptide is Uridine kinase (Streptococcus pneumoniae serotype 19F (strain G54)).